The sequence spans 596 residues: Nuclear receptor subfamily 2 group C member 2 (596 aa).

Ser19 is modified (phosphoserine; by MAPK). Ser46 bears the Phosphoserine mark. Ser55 and Ser68 each carry phosphoserine; by MAPK. Ser98 carries the post-translational modification Phosphoserine. Residues 114-189 (VEYCVVCGDK…MGMKMESVQS (76 aa)) constitute a DNA-binding region (nuclear receptor). 2 consecutive NR C4-type zinc fingers follow at residues 117-137 (CVVCGDKASGRHYGAVSCEGC) and 153-177 (CRSSQDCIINKHHRNRCQFCRLKKC). Lys192 participates in a covalent cross-link: Glycyl lysine isopeptide (Lys-Gly) (interchain with G-Cter in SUMO2). Ser219 carries the post-translational modification Phosphoserine. Lys231 carries the N6-acetyllysine modification. An NR LBD domain is found at 341–583 (GSIHVISRDQ…SIIPYILKME (243 aa)).

It belongs to the nuclear hormone receptor family. NR2 subfamily. Homodimer; can bind DNA as homodimer. Heterodimer; binds DNA as a heterodimer with NR2C1 required for chromatin remodeling and for binding to promoter regions such as globin DR1 repeats. Interacts with NR2C2AP; the interaction represses selective NR2C2-mediated transcriptional activity. Interacts with PCAF; the interaction preferentially occurs on the non-phosphorylated form and induces NR2C2-mediated transactivation activity and does not require the ligand-binding domain. Interacts (MAPK-mediated phosphorylated form) with NRIP1; the interaction promotes repression of NR2C2-mediated activity. Interacts with NLRP10. Interacts (via ligand-binding region) with transcriptional corepressor JAZF1; the interaction promotes NR2C2-mediated transcriptional repression. In terms of processing, phosphorylation on Ser-19 and Ser-68 is an important regulator of NR2C2-mediated transcriptional activity. Phosphorylation on these residues recruits the corepressor, NRIP1, leading to transcripional repression, whereas the non-phosphorylated form preferentially recruits the coactivator, PCAF. As to expression, expressed in hepatocytes. Also expressed in granule cells of the hippocampus and the cerebellum.

Its subcellular location is the nucleus. Orphan nuclear receptor that can act as a repressor or activator of transcription. An important repressor of nuclear receptor signaling pathways such as retinoic acid receptor, retinoid X, vitamin D3 receptor, thyroid hormone receptor and estrogen receptor pathways. May regulate gene expression during the late phase of spermatogenesis. Activates transcriptional activity of LHCG and is antagonist of PPARA-mediated transactivation. Together with NR2C1, forms the core of the DRED (direct repeat erythroid-definitive) complex that represses embryonic and fetal globin transcription including that of GATA1. Binds to hormone response elements (HREs) consisting of two 5'-AGGTCA-3' half site direct repeat consensus sequences. Plays a fundamental role in early embryonic development and embryonic stem cells. Required for normal spermatogenesis and cerebellum development. Appears to be important for neurodevelopmentally regulated behavior. The polypeptide is Nuclear receptor subfamily 2 group C member 2 (Nr2c2) (Rattus norvegicus (Rat)).